The primary structure comprises 299 residues: Serine/threonine-protein kinase 1 (299 aa).

In terms of domain architecture, Protein kinase spans Ile39–Phe277. ATP contacts are provided by residues Phe45–Val53 and Lys66. Residue Asp153 is the Proton acceptor of the active site.

This sequence belongs to the protein kinase superfamily. Ser/Thr protein kinase family.

It is found in the virion. It localises to the host cytoplasm. The catalysed reaction is L-seryl-[protein] + ATP = O-phospho-L-seryl-[protein] + ADP + H(+). The enzyme catalyses L-threonyl-[protein] + ATP = O-phospho-L-threonyl-[protein] + ADP + H(+). Functionally, essential for viral replication. It may mediate the virus progression through DNA replication. This African swine fever virus (isolate Pig/Kenya/KEN-50/1950) (ASFV) protein is Serine/threonine-protein kinase 1.